The chain runs to 403 residues: Putative transport protein TP_0553 (403 aa).

A run of 8 helical transmembrane segments spans residues 10 to 30, 31 to 51, 92 to 112, 202 to 222, 243 to 263, 271 to 291, 293 to 313, and 350 to 370; these read ISLF…FVPY, LTVL…YRAL, AAVF…FIAI, LYFF…ALPL, KGLF…YGIF, LAML…CVWL, VGIS…LFVA, and TFGF…FTVI.

Belongs to the autoinducer-2 exporter (AI-2E) (TC 2.A.86) family.

The protein resides in the cell membrane. This chain is Putative transport protein TP_0553, found in Treponema pallidum (strain Nichols).